The chain runs to 97 residues: Protein YukE (97 aa).

A coiled-coil region spans residues 21–94 (VESQEVLNQV…ESTDQDIANQ (74 aa)).

It belongs to the WXG100 family. sagEsxA-like subfamily. In terms of assembly, homodimer.

It localises to the secreted. Its function is as follows. Required to deliver LXG toxins to target cells. This is Protein YukE (yukE) from Bacillus subtilis (strain 168).